The chain runs to 1273 residues: Receptor-type tyrosine-protein phosphatase C (1273 aa).

Positions 1 to 23 (MYLWLKLLAFSLALLGPEVFVTG) are cleaved as a signal peptide. Residues 24–546 (QGTTDDGLDT…KPQSTSYNSK (523 aa)) lie on the Extracellular side of the membrane. Residues 45–192 (LPARTTEFTP…TEIATPQTKP (148 aa)) are disordered. Polar residues-rich tracts occupy residues 50–77 (TEFT…SSTL), 84–111 (QPDS…TLTA), and 141–192 (RNST…QTKP). N-linked (GlcNAc...) asparagine glycosylation is present at N62. 15 N-linked (GlcNAc...) asparagine glycosylation sites follow: N142, N153, N164, N178, N200, N245, N250, N271, N282, N327, N333, N371, N374, N471, and N502. 2 Fibronectin type-III domains span residues 361–452 (PEML…TKAA) and 453–545 (RPGK…SYNS). A helical transmembrane segment spans residues 547 to 567 (ALIIFLVFLIIVTSIALLVVL). Residues 568–1273 (YKIYDLRKKR…PMSPALTPSS (706 aa)) are Cytoplasmic-facing. Tyrosine-protein phosphatase domains are found at residues 622–881 (FLAE…LVEY) and 913–1196 (LEAE…MASI). At Y652 the chain carries Phosphotyrosine. Residues D790, 822–828 (CSAGVGR), and Q866 contribute to the substrate site. Residue C822 is the Phosphocysteine intermediate of the active site. S944, S963, S966, S970, S973, S974, and S978 each carry phosphoserine. Residues 960 to 984 (LEMSKESEAESDESSDEDSDSEETS) form a disordered region. Residues 968–981 (AESDESSDEDSDSE) are compositionally biased toward acidic residues. C1137 serves as the catalytic Phosphocysteine intermediate. Residues S1209 and S1266 each carry the phosphoserine modification. The segment at 1219-1273 (VDGAKQDANCVQPADPLNKAQEDSKEVGASEPASGSEEPEHSANGPMSPALTPSS) is disordered.

It belongs to the protein-tyrosine phosphatase family. Receptor class 1/6 subfamily. In terms of assembly, interacts with SKAP1. Interacts with DPP4; the interaction is enhanced in an interleukin-12-dependent manner in activated lymphocytes. Binds GANAB and PRKCSH. Interacts with CD53; this interaction stabilizes PTPRC on the membrane and is required for optimal phosphatase activity. Interacts with CLEC10A. Post-translationally, heavily N- and O-glycosylated. In terms of processing, the cytoplasmic domain contains potential phosphorylation sites. Isoform 1 and isoform 2 are found in thymocyte and lymph node. Isoform 4 and isoform 3 are found in the lymph nod.

It localises to the cell membrane. The protein resides in the membrane raft. The protein localises to the synapse. It carries out the reaction O-phospho-L-tyrosyl-[protein] + H2O = L-tyrosyl-[protein] + phosphate. Functionally, protein tyrosine-protein phosphatase required for T-cell activation through the antigen receptor. Acts as a positive regulator of T-cell coactivation upon binding to DPP4. The first PTPase domain has enzymatic activity, while the second one seems to affect the substrate specificity of the first one. Upon T-cell activation, recruits and dephosphorylates SKAP1 and FYN. Dephosphorylates LYN, and thereby modulates LYN activity. Interacts with CLEC10A at antigen presenting cell-T cell contact; CLEC10A on immature dendritic cells recognizes Tn antigen-carrying PTPRC/CD45 receptor on effector T cells and modulates T cell activation threshold to limit autoreactivity. This chain is Receptor-type tyrosine-protein phosphatase C (Ptprc), found in Rattus norvegicus (Rat).